We begin with the raw amino-acid sequence, 509 residues long: Aspartic proteinase oryzasin-1 (509 aa).

Residues 1 to 24 (MGTRSVALVLLAAVLLQALLPASA) form the signal peptide. Positions 25-67 (AEGLVRIALKKRPIDENSRVAARLSGEEGARRLGLRGANSLGG) are cleaved as a propeptide — activation peptide. The region spanning 85 to 506 (YFGEIGVGTP…DYGKMRVGFA (422 aa)) is the Peptidase A1 domain. The active site involves aspartate 103. A disulfide bond links cysteine 116 and cysteine 122. An N-linked (GlcNAc...) asparagine glycan is attached at asparagine 252. Cysteine 281 and cysteine 285 are oxidised to a cystine. Aspartate 290 is an active-site residue. Residues 315–420 (VVSQECKTVV…NQLCDKLPSP (106 aa)) form the Saposin B-type domain. Intrachain disulfides connect cysteine 320–cysteine 414, cysteine 345–cysteine 386, cysteine 351–cysteine 383, and cysteine 428–cysteine 465. Asparagine 400 carries an N-linked (GlcNAc...) asparagine glycan.

The protein belongs to the peptidase A1 family.

It is found in the vacuole. In terms of biological role, involved in the breakdown of propeptides of storage proteins in protein-storage vacuoles. This chain is Aspartic proteinase oryzasin-1, found in Oryza sativa subsp. japonica (Rice).